The chain runs to 230 residues: Lecithin retinol acyltransferase (230 aa).

At 1-194 (MKNPMLEVVS…VKIIIRDQRS (194 aa)) the chain is on the cytoplasmic side. Residues 50 to 177 (VLEVPRTHLT…CRYGTPISPQ (128 aa)) form the LRAT domain. Catalysis depends on residues histidine 60 and histidine 72. Residue cysteine 161 is the Acyl-thioester intermediate of the active site. A helical membrane pass occupies residues 195–215 (VLASAVLGLASIVCTGLVSYT). The Lumenal portion of the chain corresponds to 216–230 (TLPAIFIPFFLWMAG).

Belongs to the H-rev107 family. Hepatic stellate cells and endothelial cells (at protein level). Found at high levels in testis and liver, followed by retinal pigment epithelium, small intestine, prostate, pancreas and colon. Low expression observed in brain. In fetal tissues, expressed in retinal pigment epithelium and liver, and barely in the brain.

It localises to the endoplasmic reticulum membrane. It is found in the rough endoplasmic reticulum. Its subcellular location is the endosome. The protein resides in the multivesicular body. The protein localises to the cytoplasm. It localises to the perinuclear region. The catalysed reaction is all-trans-retinol--[retinol-binding protein] + a 1,2-diacyl-sn-glycero-3-phosphocholine = apo--[retinol-binding protein] + an all-trans-retinyl ester + a 2-acyl-sn-glycero-3-phosphocholine. It carries out the reaction 1,2-dihexadecanoyl-sn-glycero-3-phosphocholine + all-trans-retinol = all-trans-retinyl hexadecanoate + 2-hexadecanoyl-sn-glycero-3-phosphocholine. It catalyses the reaction 1,2-diheptanoyl-sn-glycero-3-phosphocholine + all-trans-retinol--[retinol-binding protein] = all-trans-retinyl heptanoate + 2-heptanoyl-sn-glycero-3-phosphocholine + apo--[retinol-binding protein]. The enzyme catalyses 1,2-dioctanoyl-sn-glycero-3-phosphocholine + all-trans-retinol--[retinol-binding protein] = 2-octanoyl-sn-glycero-3-phosphocholine + all-trans-retinyl octanoate + apo--[retinol-binding protein]. The catalysed reaction is all-trans-retinol--[retinol-binding protein] + 1,2-dihexadecanoyl-sn-glycero-3-phosphocholine = apo--[retinol-binding protein] + all-trans-retinyl hexadecanoate + 2-hexadecanoyl-sn-glycero-3-phosphocholine. It carries out the reaction 1,2-didodecanoyl-sn-glycero-3-phosphocholine + all-trans-retinol--[retinol-binding protein] = 2-dodecanoyl-sn-glycero-3-phosphocholine + all-trans-retinyl dodecanoate + apo--[retinol-binding protein]. It functions in the pathway cofactor metabolism; retinol metabolism. Its activity is regulated as follows. Inhibited by all-trans-retinyl alpha-bromoacetate and N-boc-L-biocytinyl-11-aminoundecane chloro-methyl ketone (BACMK). In terms of biological role, transfers the acyl group from the sn-1 position of phosphatidylcholine to all-trans retinol, producing all-trans retinyl esters. Retinyl esters are storage forms of vitamin A. LRAT plays a critical role in vision. It provides the all-trans retinyl ester substrates for the isomerohydrolase which processes the esters into 11-cis-retinol in the retinal pigment epithelium; due to a membrane-associated alcohol dehydrogenase, 11 cis-retinol is oxidized and converted into 11-cis-retinaldehyde which is the chromophore for rhodopsin and the cone photopigments. Required for the survival of cone photoreceptors and correct rod photoreceptor cell morphology. The protein is Lecithin retinol acyltransferase of Homo sapiens (Human).